The following is a 584-amino-acid chain: Negative regulator of RAS-cAMP pathway (584 aa).

Residue T25 is modified to Phosphothreonine. Disordered regions lie at residues P95–S167, P209–S279, S291–N320, N343–V366, and S381–T432. 3 stretches are compositionally biased toward polar residues: residues P114 to M127, C229 to Q254, and N267 to T278. Phosphoserine is present on residues S247 and S276. Acidic residues predominate over residues F307–N320. The span at N343–H363 shows a compositional bias: polar residues. The span at S381 to E392 shows a compositional bias: low complexity. The span at V398–T432 shows a compositional bias: polar residues. S442 is subject to Phosphoserine. S518 is modified (phosphoserine; by PKA). The disordered stretch occupies residues D551–I584. Low complexity predominate over residues N557–N568.

The protein localises to the nucleus. Functionally, negative regulator of Ras-cAMP pathway. Involved in transcriptional regulation of galactose-inducible genes. The chain is Negative regulator of RAS-cAMP pathway (MKS1) from Saccharomyces cerevisiae (strain ATCC 204508 / S288c) (Baker's yeast).